The chain runs to 1023 residues: Sodium/potassium-transporting ATPase subunit alpha-1 (1023 aa).

Residues 1 to 5 (MGKGV) constitute a propeptide that is removed on maturation. A compositionally biased stretch (basic and acidic residues) spans 1–11 (MGKGVGRDKYE). The segment at 1-39 (MGKGVGRDKYEPAAVSEQGDKKGKKGKKDRDMDELKKEV) is disordered. Topologically, residues 6–87 (GRDKYEPAAV…NALTPPPTTP (82 aa)) are cytoplasmic. Lys-9 carries the N6-acetyllysine modification. The residue at position 10 (Tyr-10) is a Phosphotyrosine. The residue at position 16 (Ser-16) is a Phosphoserine. Lys-21 is subject to N6-acetyllysine. A compositionally biased stretch (basic and acidic residues) spans 28–39 (KDRDMDELKKEV). Ser-40 and Ser-47 each carry phosphoserine. The tract at residues 82 to 84 (PPP) is phosphoinositide-3 kinase binding. The helical transmembrane segment at 88–108 (EWIKFCRQLFGGFSMLLWIGA) threads the bilayer. The Extracellular portion of the chain corresponds to 109–131 (ILCFLAYSIQAATEEEPQNDNLY). A helical membrane pass occupies residues 132–152 (LGVVLSAVVIITGCFSYYQEA). Residues 153-288 (KSSKIMESFK…GGQTPIAAEI (136 aa)) are Cytoplasmic-facing. Residues 216–235 (SSLTGESEPQTRSPDFTNEN) are disordered. Phosphoserine is present on Ser-228. Residue Tyr-260 is modified to Phosphotyrosine. The helical transmembrane segment at 289–308 (EHFIHIITGVAVFLGVSFFI) threads the bilayer. At 309–320 (LSLILEYTWLEA) the chain is on the extracellular side. Residues 321–338 (VIFLIGIIVANVPEGLLA) form a helical membrane-spanning segment. Residues 339 to 772 (TVTVCLTLTA…EEGRLIFDNL (434 aa)) lie on the Cytoplasmic side of the membrane. Asp-376 acts as the 4-aspartylphosphate intermediate in catalysis. Residues Ser-452 and Ser-484 each carry the phosphoserine modification. Lys-487 is an ATP binding site. At Tyr-542 the chain carries Phosphotyrosine. The mediates interaction with SCN7A stretch occupies residues 596–717 (RAAVPDAVGK…QGAIVAVTGD (122 aa)). Position 661 is an N6-succinyllysine (Lys-661). Phosphoserine is present on residues Ser-668 and Ser-675. Mg(2+)-binding residues include Asp-717 and Asp-721. The helical transmembrane segment at 773-792 (KKSIAYTLTSNIPEITPFLI) threads the bilayer. Residues 793 to 802 (FIIANIPLPL) lie on the Extracellular side of the membrane. The helical transmembrane segment at 803 to 823 (GTVTILCIDLGTDMVPAISLA) threads the bilayer. Topologically, residues 824 to 843 (YEQAESDIMKRQPRNPKTDK) are cytoplasmic. The helical transmembrane segment at 844-866 (LVNERLISMAYGQIGMIQALGGF) threads the bilayer. At 867-918 (FTYFVILAENGFLPIHLLGLRVDWDDRWINDVEDSYGQQWTYEQRKIVEFTC) the chain is on the extracellular side. A helical transmembrane segment spans residues 919-938 (HTAFFVSIVVVQWADLVICK). At 939–951 (TRRNSVFQQGMKN) the chain is on the cytoplasmic side. A Phosphoserine; by PKA modification is found at Ser-943. A helical membrane pass occupies residues 952–970 (KILIFGLFEETALAAFLSY). Topologically, residues 971–985 (CPGMGVALRMYPLKP) are extracellular. The chain crosses the membrane as a helical span at residues 986 to 1006 (TWWFCAFPYSLLIFVYDEVRK). The Cytoplasmic segment spans residues 1007–1023 (LIIRRRPGGWVEKETYY).

It belongs to the cation transport ATPase (P-type) (TC 3.A.3) family. Type IIC subfamily. In terms of assembly, the sodium/potassium-transporting ATPase is composed of a catalytic alpha subunit, an auxiliary non-catalytic beta subunit and an additional regulatory subunit. Interacts with regulatory subunit FXYD1. Interacts with regulatory subunit FXYD3. Interacts with SIK1. Binds the HLA class II histocompatibility antigen DR1. Interacts with SLC35G1 and STIM1. Interacts with CLN3; this interaction regulates the sodium/potassium-transporting ATPase complex localization at the plasma membrane. Interacts with SCN7A; activates ATP1A1 P-type sodium:potassium-exchanging transporter activity which indirectly signals to nearby neurons to regulate sodium homeostasis. Post-translationally, phosphorylation on Tyr-10 modulates pumping activity. Phosphorylation of Ser-943 by PKA modulates the response of ATP1A1 to PKC. Dephosphorylation by protein phosphatase 2A (PP2A) following increases in intracellular sodium, leading to increase catalytic activity.

The protein resides in the cell membrane. It localises to the basolateral cell membrane. It is found in the sarcolemma. Its subcellular location is the cell projection. The protein localises to the axon. The protein resides in the melanosome. It carries out the reaction K(+)(out) + Na(+)(in) + ATP + H2O = K(+)(in) + Na(+)(out) + ADP + phosphate + H(+). In terms of biological role, this is the catalytic component of the active enzyme, which catalyzes the hydrolysis of ATP coupled with the exchange of sodium and potassium ions across the plasma membrane. This action creates the electrochemical gradient of sodium and potassium ions, providing the energy for active transport of various nutrients. Could also be part of an osmosensory signaling pathway that senses body-fluid sodium levels and controls salt intake behavior as well as voluntary water intake to regulate sodium homeostasis. In Homo sapiens (Human), this protein is Sodium/potassium-transporting ATPase subunit alpha-1 (ATP1A1).